The chain runs to 341 residues: Anthranilate phosphoribosyltransferase (341 aa).

Residues Gly85, 88 to 89 (GD), Thr93, 95 to 98 (NIST), 113 to 121 (KHGNRSASG), and Ser125 contribute to the 5-phospho-alpha-D-ribose 1-diphosphate site. Residue Gly85 participates in anthranilate binding. Ser97 serves as a coordination point for Mg(2+). Asn116 contacts anthranilate. Position 171 (Arg171) interacts with anthranilate. Positions 230 and 231 each coordinate Mg(2+).

This sequence belongs to the anthranilate phosphoribosyltransferase family. As to quaternary structure, homodimer. Mg(2+) serves as cofactor.

The catalysed reaction is N-(5-phospho-beta-D-ribosyl)anthranilate + diphosphate = 5-phospho-alpha-D-ribose 1-diphosphate + anthranilate. It functions in the pathway amino-acid biosynthesis; L-tryptophan biosynthesis; L-tryptophan from chorismate: step 2/5. In terms of biological role, catalyzes the transfer of the phosphoribosyl group of 5-phosphorylribose-1-pyrophosphate (PRPP) to anthranilate to yield N-(5'-phosphoribosyl)-anthranilate (PRA). This chain is Anthranilate phosphoribosyltransferase, found in Prochlorococcus marinus (strain SARG / CCMP1375 / SS120).